The primary structure comprises 217 residues: MRLRHKPYAMDRINEYSHIVIGNPEERAGNWKEVFGNEQPIHIEVGTGRGRFMYDMAKANPHINYIGIEKFTSVVVDALDKLIEEEVPNLKLINKDAEDLTVFFAKGEIDRVYLNFSDPWPKKRHTKRRLTYKTFLRNYEEVLVEGGEIHFKTDNQGLFEYSLMSMAEYGMLLTYLSLDLHNSDFEGNIMTEYEEKFSSKGHRIYRVEAKYRTEPMQ.

4 residues coordinate S-adenosyl-L-methionine: E44, E69, D96, and D118. D118 is an active-site residue. Substrate is bound by residues K122, D154, and 191-194 (TEYE).

It belongs to the class I-like SAM-binding methyltransferase superfamily. TrmB family.

It carries out the reaction guanosine(46) in tRNA + S-adenosyl-L-methionine = N(7)-methylguanosine(46) in tRNA + S-adenosyl-L-homocysteine. Its pathway is tRNA modification; N(7)-methylguanine-tRNA biosynthesis. Catalyzes the formation of N(7)-methylguanine at position 46 (m7G46) in tRNA. This Bacillus cereus (strain G9842) protein is tRNA (guanine-N(7)-)-methyltransferase.